The following is a 313-amino-acid chain: uncharacterized protein (313 aa).

Disordered regions lie at residues 24–53 (EEGE…PTPN) and 190–291 (TALS…PCAR). Positions 211–229 (TQNYVLKLQLSSPNSQPMS) are enriched in polar residues. Residues 239-260 (SCSSSNCSSSSSSSACSSVSIS) show a composition bias toward low complexity. Over residues 261–284 (DPNNITAYETNNVNPQFPSNQPLD) the composition is skewed to polar residues.

This is an uncharacterized protein from Saccharomyces cerevisiae (strain ATCC 204508 / S288c) (Baker's yeast).